The primary structure comprises 509 residues: L-arabinose isomerase (509 aa).

Mn(2+) is bound by residues glutamate 313, glutamate 340, histidine 357, and histidine 456.

Belongs to the arabinose isomerase family. Mn(2+) serves as cofactor.

The enzyme catalyses beta-L-arabinopyranose = L-ribulose. It participates in carbohydrate degradation; L-arabinose degradation via L-ribulose; D-xylulose 5-phosphate from L-arabinose (bacterial route): step 1/3. In terms of biological role, catalyzes the conversion of L-arabinose to L-ribulose. This is L-arabinose isomerase from Bacteroides thetaiotaomicron (strain ATCC 29148 / DSM 2079 / JCM 5827 / CCUG 10774 / NCTC 10582 / VPI-5482 / E50).